A 212-amino-acid polypeptide reads, in one-letter code: Sclerostin (212 aa).

A signal peptide spans 1–23 (MQLSLALCLVCLLVHAAFRVVEG). N-linked (GlcNAc...) asparagine glycosylation is present at Asn-52. 4 disulfides stabilise this stretch: Cys-79–Cys-133, Cys-93–Cys-147, Cys-104–Cys-164, and Cys-108–Cys-166. Residues 81–171 (ELHFTRYVTD…ASCKCKRLTR (91 aa)) form the CTCK domain. N-linked (GlcNAc...) asparagine glycosylation is present at Asn-174. The segment at 179 to 212 (KDFGPEAARPQTGRKLRPRARGTKASRAELENAY) is disordered. Basic residues predominate over residues 190–202 (TGRKLRPRARGTK).

Belongs to the sclerostin family. As to quaternary structure, interacts with LRP4 (via the extracellular domain); the interaction facilitates the inhibition of Wnt signaling. Interacts with LRP5 (via the first two YWTD-EGF repeat domains); the interaction inhibits Wnt-mediated signaling. Interacts with LRP6.

It is found in the secreted. The protein localises to the extracellular space. The protein resides in the extracellular matrix. Functionally, negative regulator of bone growth that acts through inhibition of Wnt signaling and bone formation. This is Sclerostin from Bos taurus (Bovine).